We begin with the raw amino-acid sequence, 390 residues long: 23S rRNA (uracil(747)-C(5))-methyltransferase RlmC (390 aa).

Residues cysteine 12, cysteine 20, cysteine 23, and cysteine 100 each contribute to the [4Fe-4S] cluster site. S-adenosyl-L-methionine is bound by residues glutamine 225, phenylalanine 254, glutamate 275, and asparagine 322. The Nucleophile role is filled by cysteine 349.

Belongs to the class I-like SAM-binding methyltransferase superfamily. RNA M5U methyltransferase family. RlmC subfamily.

It catalyses the reaction uridine(747) in 23S rRNA + S-adenosyl-L-methionine = 5-methyluridine(747) in 23S rRNA + S-adenosyl-L-homocysteine + H(+). In terms of biological role, catalyzes the formation of 5-methyl-uridine at position 747 (m5U747) in 23S rRNA. This is 23S rRNA (uracil(747)-C(5))-methyltransferase RlmC from Shewanella baltica (strain OS185).